Here is a 174-residue protein sequence, read N- to C-terminus: MSRAAGHRPGLSAGQLAAATASPLLSLLLLLACCADACKGVPISPQRLQPEQELQLWNEIHEACASFLSIDSRPQASVALRELCRIVMEISQKPQEQSEKDNTKRFLFHYSKTQKLGNSNVVSSVVHPLLQLVPQLHERRMKRFKAEYQSPSVGQSKGYFLFRPRNGKRSTSFI.

A signal peptide spans 1-37 (MSRAAGHRPGLSAGQLAAATASPLLSLLLLLACCADA). A propeptide spanning residues 38–105 (CKGVPISPQR…EQSEKDNTKR (68 aa)) is cleaved from the precursor. M141 is subject to Methionine sulfoxide; partial. N166 is modified (asparagine amide). A propeptide spanning residues 170–174 (STSFI) is cleaved from the precursor.

The protein belongs to the NmU family.

It localises to the secreted. Functionally, ligand for receptors NMUR1 and NMUR2. Stimulates muscle contractions of specific regions of the gastrointestinal tract. Does not function as a ligand for either NMUR1 or NMUR2. Indirectly induces prolactin release although its potency is much lower than that of neuromedin precursor-related peptide 36. In terms of biological role, does not function as a ligand for either NMUR1 or NMUR2. Indirectly induces prolactin release from lactotroph cells in the pituitary gland, probably via the hypothalamic dopaminergic system. Its function is as follows. Stimulates muscle contractions of specific regions of the gastrointestinal tract. In Mus musculus (Mouse), this protein is Neuromedin-U (Nmu).